Consider the following 108-residue polypeptide: Pyrimidine/purine nucleoside phosphorylase (108 aa).

Belongs to the nucleoside phosphorylase PpnP family.

The catalysed reaction is a purine D-ribonucleoside + phosphate = a purine nucleobase + alpha-D-ribose 1-phosphate. It carries out the reaction adenosine + phosphate = alpha-D-ribose 1-phosphate + adenine. The enzyme catalyses cytidine + phosphate = cytosine + alpha-D-ribose 1-phosphate. It catalyses the reaction guanosine + phosphate = alpha-D-ribose 1-phosphate + guanine. The catalysed reaction is inosine + phosphate = alpha-D-ribose 1-phosphate + hypoxanthine. It carries out the reaction thymidine + phosphate = 2-deoxy-alpha-D-ribose 1-phosphate + thymine. The enzyme catalyses uridine + phosphate = alpha-D-ribose 1-phosphate + uracil. It catalyses the reaction xanthosine + phosphate = alpha-D-ribose 1-phosphate + xanthine. Its function is as follows. Catalyzes the phosphorolysis of diverse nucleosides, yielding D-ribose 1-phosphate and the respective free bases. Can use uridine, adenosine, guanosine, cytidine, thymidine, inosine and xanthosine as substrates. Also catalyzes the reverse reactions. This chain is Pyrimidine/purine nucleoside phosphorylase, found in Acinetobacter baylyi (strain ATCC 33305 / BD413 / ADP1).